Reading from the N-terminus, the 152-residue chain is Natriuretic peptides A (152 aa).

The N-terminal stretch at Met1–Ala24 is a signal peptide. 2 consecutive propeptides follow at residues Asn25–Arg122 and Glu92–Gly102. Residues Met50–Val108 are disordered. Ser128 is modified (phosphoserine). A disulfide bridge links Cys129 with Cys145. Positions Asn146 to Tyr150 are important for degradation of atrial natriuretic peptide by IDE.

The protein belongs to the natriuretic peptide family. In terms of assembly, homodimer; disulfide-linked antiparallel dimer. In terms of processing, the precursor molecule is proteolytically cleaved by CORIN at Arg-122 to produce the atrial natriuretic peptide. Undergoes further proteolytic cleavage by unknown proteases to give rise to long-acting natriuretic peptide, vessel dilator and kaliuretic peptide. Additional processing gives rise to the auriculin and atriopeptin peptides. In the kidneys, alternative processing by an unknown protease results in the peptide urodilatin. Post-translationally, cleavage by MME initiates degradation of the factor and thereby regulates its activity. Degradation by IDE results in reduced activation of NPR1 (in vitro). During IDE degradation, the resulting products can temporarily stimulate NPR2 to produce cGMP, before the fragments are completely degraded and inactivated by IDE (in vitro). Degraded by IDE. In terms of processing, phosphorylation on Ser-128 decreases vasorelaxant activity.

It localises to the secreted. The protein resides in the perikaryon. The protein localises to the cell projection. Hormone that plays a key role in mediating cardio-renal homeostasis, and is involved in vascular remodeling and regulating energy metabolism. Acts by specifically binding and stimulating NPR1 to produce cGMP, which in turn activates effector proteins, such as PRKG1, that drive various biological responses. Regulates vasodilation, natriuresis, diuresis and aldosterone synthesis and is therefore essential for regulating blood pressure, controlling the extracellular fluid volume and maintaining the fluid-electrolyte balance. Also involved in inhibiting cardiac remodeling and cardiac hypertrophy by inducing cardiomyocyte apoptosis and attenuating the growth of cardiomyocytes and fibroblasts. Plays a role in female pregnancy by promoting trophoblast invasion and spiral artery remodeling in uterus, and thus prevents pregnancy-induced hypertension. In adipose tissue, acts in various cGMP- and PKG-dependent pathways to regulate lipid metabolism and energy homeostasis. This includes up-regulating lipid metabolism and mitochondrial oxygen utilization by activating the AMP-activated protein kinase (AMPK), and increasing energy expenditure by acting via MAPK11 to promote the UCP1-dependent thermogenesis of brown adipose tissue. Binds the clearance receptor NPR3 which removes the hormone from circulation. Functionally, may have a role in cardio-renal homeostasis through regulation of natriuresis, diuresis, vasodilation, and inhibiting aldosterone synthesis. In vitro, promotes the production of cGMP and induces vasodilation. May promote natriuresis, at least in part, by enhancing prostaglandin E2 synthesis resulting in the inhibition of renal Na+-K+-ATPase. However reports on the involvement of this peptide in mammal blood volume and blood pressure homeostasis are conflicting; according to a report, in vivo it is not sufficient to activate cGMP and does not inhibit collecting duct transport nor effect diuresis and natriuresis. Appears to bind to specific receptors that are distinct from the receptors bound by atrial natriuretic peptide and vessel dilator. Possibly enhances protein excretion in urine by decreasing proximal tubular protein reabsorption. Its function is as follows. May have a role in cardio-renal homeostasis through regulation of natriuresis, diuresis, and vasodilation. In vitro, promotes the production of cGMP and induces vasodilation. May promote natriuresis, at least in part, by enhancing prostaglandin E2 synthesis resulting in the inhibition of renal Na+-K+-ATPase. However reports on the involvement of this peptide in mammal blood volume and blood pressure homeostasis are conflicting; according to a report it is not sufficient to activate cGMP and does not inhibit collecting duct transport nor effect diuresis and natriuresis. Appears to bind to specific receptors that are distinct from the receptors bound by the atrial natriuretic and long-acting natriuretic peptides. Possibly functions in protein excretion in urine by maintaining the integrity of the proximal tubules and enhancing protein excretion by decreasing proximal tubular protein reabsorption. In terms of biological role, may have a role in cardio-renal homeostasis through regulation of diuresis and inhibiting aldosterone synthesis. In vitro, promotes the production of cGMP and induces vasodilation. May promote natriuresis, at least in part, by enhancing prostaglandin E2 synthesis resulting in the inhibition of renal Na+-K+-ATPase. May have a role in potassium excretion but not sodium excretion (natriuresis). Possibly enhances protein excretion in urine by decreasing proximal tubular protein reabsorption. Hormone produced in the kidneys that appears to be important for maintaining cardio-renal homeostasis. Mediates vasodilation, natriuresis and diuresis primarily in the renal system, in order to maintain the extracellular fluid volume and control the fluid-electrolyte balance. Specifically binds and stimulates cGMP production by renal transmembrane receptors, likely NPR1. Urodilatin not ANP, may be the natriuretic peptide responsible for the regulation of sodium and water homeostasis in the kidney. Functionally, may have a role in cardio-renal homeostasis through regulation of natriuresis and vasodilation. In vivo promotes natriuresis and in vitro, vasodilates renal artery strips. Its function is as follows. May have a role in cardio-renal homeostasis through regulation of regulation of natriuresis and vasodilation. In vivo promotes natriuresis. In vitro, vasodilates intestinal smooth muscle but not smooth muscle strips. In terms of biological role, may have a role in cardio-renal homeostasis through regulation of natriuresis and vasodilation. In vivo promotes natriuresis. In vitro, selectively vasodilates intestinal and vascular smooth muscle strips. May have a role in cardio-renal homeostasis through regulation of natriuresis and vasodilation. In vivo promotes natriuresis. In vitro, selectively vasodilates intestinal smooth muscle but not vascular smooth muscle strips. The polypeptide is Natriuretic peptides A (NPPA) (Ovis aries (Sheep)).